The sequence spans 37 residues: Large ribosomal subunit protein bL36 (37 aa).

It belongs to the bacterial ribosomal protein bL36 family.

The sequence is that of Large ribosomal subunit protein bL36 from Ureaplasma urealyticum serovar 10 (strain ATCC 33699 / Western).